Here is a 224-residue protein sequence, read N- to C-terminus: Ribose-5-phosphate isomerase A 1 (224 aa).

Substrate is bound by residues 29–32 (SGST), 85–88 (DGAD), and 98–101 (KGGG). The active-site Proton acceptor is E107. Residue K125 participates in substrate binding.

Belongs to the ribose 5-phosphate isomerase family. Homodimer.

It catalyses the reaction aldehydo-D-ribose 5-phosphate = D-ribulose 5-phosphate. It functions in the pathway carbohydrate degradation; pentose phosphate pathway; D-ribose 5-phosphate from D-ribulose 5-phosphate (non-oxidative stage): step 1/1. Functionally, catalyzes the reversible conversion of ribose-5-phosphate to ribulose 5-phosphate. This Oceanobacillus iheyensis (strain DSM 14371 / CIP 107618 / JCM 11309 / KCTC 3954 / HTE831) protein is Ribose-5-phosphate isomerase A 1.